The sequence spans 156 residues: Beta-defensin 125 (156 aa).

The first 20 residues, Met1 to Gly20, serve as a signal peptide directing secretion. Disulfide bonds link Cys27–Cys55, Cys35–Cys49, and Cys39–Cys56. Residues Pro68 to Asn156 constitute a propeptide that is removed on maturation. Positions Gly108 to Asn156 are disordered. Residues Glu109–Thr144 are compositionally biased toward low complexity.

It belongs to the beta-defensin family.

It localises to the secreted. Functionally, has antibacterial activity. The sequence is that of Beta-defensin 125 (DEFB125) from Homo sapiens (Human).